The sequence spans 526 residues: MCALPSPRAQRPPACTRTSKNSCALLASRYNGSCSNDFGRLLASNLKILRNIILKDDTEFVKVWSKTSKSLISYESGRIYFDNYRCCYSSLLPEPELLYELPRTPKTEKIEDALLCQCPLENVLPNASEQKSCLLTLTANNWLYLLSADTGETLQRVYLSSRFKFSRSLGWDSSQETFYVKSVQCKQTALERQAGVDNNILMRVAAFQVFPLQLVGMLEINKKVFGKTAVDVLLSQGVLAVSHSSKLVRLYSFEYIVNKFRTEELILGQQCELNNARGIVGDAPYGVPVNICIHECPPVLFEMTYFENGVQIGGHPWHYIYTPNHKRHRGTHHVCSITDGALAKNGVQDMKCDSLEVDWIFFHPDDSGRIIHAGPSTINILKIMAETGCDWKYEIITDFSITAARDSNASQVIVTSSGRTVKRRFQMLDDDPAQETFRMVKYEDELDLLAVVDITHAEDEGQARLRLHDNKTGALMKRVPLEEPWDVTYSHEVYFDRDTIIHTVQEKNNSFCCHVYKMKRPASDQP.

The next 2 helical transmembrane spans lie at 200-220 and 237-257; these read ILMR…MLEI and GVLA…EYIV.

It localises to the membrane. The protein resides in the nucleus. It is found in the nucleolus. The protein operates within protein modification; protein ubiquitination. Its function is as follows. May function as a substrate receptor for CUL4-DDB1 E3 ubiquitin-protein ligase complex. The protein is DDB1- and CUL4-associated factor 17 (dcaf17) of Danio rerio (Zebrafish).